Reading from the N-terminus, the 357-residue chain is Dihydroorotate dehydrogenase (quinone) (357 aa).

FMN is bound by residues 61-65 and Thr85; that span reads AGFDK. Residue Lys65 coordinates substrate. 110 to 114 serves as a coordination point for substrate; the sequence is NRFGF. Asn141 and Asn172 together coordinate FMN. Asn172 contacts substrate. The active-site Nucleophile is Ser175. Position 177 (Asn177) interacts with substrate. FMN is bound by residues Lys217 and Gly245. Position 246-247 (246-247) interacts with substrate; the sequence is NT. Residues Gly268, Gly297, and 318–319 each bind FMN; that span reads YS.

It belongs to the dihydroorotate dehydrogenase family. Type 2 subfamily. In terms of assembly, monomer. Requires FMN as cofactor.

The protein resides in the cell membrane. The enzyme catalyses (S)-dihydroorotate + a quinone = orotate + a quinol. It participates in pyrimidine metabolism; UMP biosynthesis via de novo pathway; orotate from (S)-dihydroorotate (quinone route): step 1/1. Its function is as follows. Catalyzes the conversion of dihydroorotate to orotate with quinone as electron acceptor. This is Dihydroorotate dehydrogenase (quinone) from Xanthobacter autotrophicus (strain ATCC BAA-1158 / Py2).